The sequence spans 232 residues: Phosphoglycolate phosphatase (232 aa).

Catalysis depends on aspartate 8, which acts as the Nucleophile. The Mg(2+) site is built by aspartate 8 and aspartate 10. Lysine 155 serves as a coordination point for substrate. Mg(2+) is bound by residues aspartate 178 and aspartate 182.

Belongs to the archaeal SPP-like hydrolase family. It depends on Mg(2+) as a cofactor.

It carries out the reaction 2-phosphoglycolate + H2O = glycolate + phosphate. Functionally, catalyzes the dephosphorylation of 2-phosphoglycolate. This Methanospirillum hungatei JF-1 (strain ATCC 27890 / DSM 864 / NBRC 100397 / JF-1) protein is Phosphoglycolate phosphatase.